The primary structure comprises 443 residues: ATP-dependent protease ATPase subunit HslU (443 aa).

ATP contacts are provided by residues valine 18, glycine 60–glutamate 65, aspartate 255, glutamate 321, and arginine 393.

Belongs to the ClpX chaperone family. HslU subfamily. In terms of assembly, a double ring-shaped homohexamer of HslV is capped on each side by a ring-shaped HslU homohexamer. The assembly of the HslU/HslV complex is dependent on binding of ATP.

The protein resides in the cytoplasm. ATPase subunit of a proteasome-like degradation complex; this subunit has chaperone activity. The binding of ATP and its subsequent hydrolysis by HslU are essential for unfolding of protein substrates subsequently hydrolyzed by HslV. HslU recognizes the N-terminal part of its protein substrates and unfolds these before they are guided to HslV for hydrolysis. The sequence is that of ATP-dependent protease ATPase subunit HslU from Colwellia psychrerythraea (strain 34H / ATCC BAA-681) (Vibrio psychroerythus).